The chain runs to 119 residues: Large ribosomal subunit protein bL20 (119 aa).

It belongs to the bacterial ribosomal protein bL20 family.

Functionally, binds directly to 23S ribosomal RNA and is necessary for the in vitro assembly process of the 50S ribosomal subunit. It is not involved in the protein synthesizing functions of that subunit. This Acinetobacter baumannii (strain SDF) protein is Large ribosomal subunit protein bL20.